A 413-amino-acid polypeptide reads, in one-letter code: MPTWTEYIFYKKLGKAPSPGDVVEVVPDLVGFHDLTGYHVLEVLEQMGKVEVFDRGRVVVAFDHLAPPPTQRAAELQVYIRRHVKALGLPHFYDVGGGILHQIILEKYAMPEQVIFAADSHTNTAGAVGAFAQGLGATDIAAALKLGKTWLVVPTPFAVRVVGEFPKGVMGKDVALHLLGAFGAEGFNGYSVEVTVEKPKAFPMDDRATVANMSTEMGADALVFIPDEVTVAYLHEARGVSYKPPALGGGKYADEYTVELGRLEPLVAAPHSVDNVKAVAEVEGIEVDQVFIGSCTNGRLSDIEVAAKILRHGRVKARCIAIPASYDVFRRAMELGYVDVLTKAGCVVTYGTCGPCLGGHFGVAGPGEVVLTTSNRNFKGRVGHPDSKVYLANPAVAAATALTGRITDPRQYL.

Positions 295, 353, and 356 each coordinate [4Fe-4S] cluster.

This sequence belongs to the aconitase/IPM isomerase family. LeuC type 2 subfamily. In terms of assembly, heterodimer of LeuC and LeuD. Requires [4Fe-4S] cluster as cofactor.

The enzyme catalyses (2R,3S)-3-isopropylmalate = (2S)-2-isopropylmalate. It participates in amino-acid biosynthesis; L-leucine biosynthesis; L-leucine from 3-methyl-2-oxobutanoate: step 2/4. Functionally, catalyzes the isomerization between 2-isopropylmalate and 3-isopropylmalate, via the formation of 2-isopropylmaleate. The chain is 3-isopropylmalate dehydratase large subunit from Pyrobaculum calidifontis (strain DSM 21063 / JCM 11548 / VA1).